The following is a 140-amino-acid chain: Transcription antitermination protein NusB (140 aa).

This sequence belongs to the NusB family.

Involved in transcription antitermination. Required for transcription of ribosomal RNA (rRNA) genes. Binds specifically to the boxA antiterminator sequence of the ribosomal RNA (rrn) operons. In Streptococcus pneumoniae (strain JJA), this protein is Transcription antitermination protein NusB.